The primary structure comprises 1452 residues: Pleiotropic drug resistance protein 1 (1452 aa).

In terms of domain architecture, ABC transporter 1 spans 152-425; the sequence is LNYLHILPNR…FEYMGFICPE (274 aa). ATP is bound at residue 185-192; sequence GPPSSGKT. An ABC transmembrane type-2 1 domain is found at 504 to 716; sequence LLKACTAREY…AQNAIAVNEF (213 aa). 7 consecutive transmembrane segments (helical) span residues 521 to 541, 554 to 574, 609 to 629, 640 to 660, 664 to 684, 694 to 714, and 753 to 773; these read FVYI…MTLF, GAVF…NGFS, IPIT…VIGF, LLLL…MGAL, IIVA…MGGF, WWIW…IAVN, and IGAG…AVAL. Residues 808–830 form a disordered region; that stretch reads LGKSSSEKGNDVRRSASSRSMSS. Over residues 812 to 821 the composition is skewed to basic and acidic residues; it reads SSEKGNDVRR. Residues 855–1107 enclose the ABC transporter 2 domain; that stretch reads ITFDDIRYAV…HLIKYFEGID (253 aa). An ATP-binding site is contributed by 900-907; sequence GVSGAGKT. The region spanning 1180–1394 is the ABC transmembrane type-2 2 domain; the sequence is TQCMACFWKQ…TLYGLIASQF (215 aa). 7 consecutive transmembrane segments (helical) span residues 1199 to 1219, 1239 to 1259, 1287 to 1307, 1314 to 1334, 1344 to 1364, 1375 to 1395, and 1421 to 1441; these read YTAV…TIFW, YIAV…VIAI, LPYL…MIGF, FFWY…YGMM, IAAI…GFIV, WYYY…SQFG, and FVGY…FIFA.

The protein belongs to the ABC transporter superfamily. ABCG family. PDR (TC 3.A.1.205) subfamily. In terms of tissue distribution, expressed in root hypodermal passage cells. Expressed in stem tissues, particularly the vasculature and nodes adjacent to leaf axils.

It localises to the cell membrane. In terms of biological role, cellular strigolactone (SL) transporter required for the exudation of SL from the root to the soil. The presence of SL in the vicinity of the roots is required for development of symbiotic interactions with arbuscular mycorrhizal fungi (AMF). Transports SL in the above ground tissues and is required for the control of shoot branching. SL regulates plant shoot architecture by inhibiting the outgrowth of axillary buds. Involved in the regulation of shootward and outward directional strigolactone transport in roots. Due to its polar localization in root cells, mediates directional shootward strigolactone transport, as well as localized outward directional transport for exudation to the soil. This chain is Pleiotropic drug resistance protein 1, found in Petunia axillaris (Large white petunia).